The primary structure comprises 486 residues: N-succinylglutamate 5-semialdehyde dehydrogenase (486 aa).

Position 221–226 (221–226 (GSSATG)) interacts with NAD(+). Active-site residues include glutamate 244 and cysteine 278.

It belongs to the aldehyde dehydrogenase family. AstD subfamily.

It carries out the reaction N-succinyl-L-glutamate 5-semialdehyde + NAD(+) + H2O = N-succinyl-L-glutamate + NADH + 2 H(+). It participates in amino-acid degradation; L-arginine degradation via AST pathway; L-glutamate and succinate from L-arginine: step 4/5. Its function is as follows. Catalyzes the NAD-dependent reduction of succinylglutamate semialdehyde into succinylglutamate. The chain is N-succinylglutamate 5-semialdehyde dehydrogenase from Chromobacterium violaceum (strain ATCC 12472 / DSM 30191 / JCM 1249 / CCUG 213 / NBRC 12614 / NCIMB 9131 / NCTC 9757 / MK).